The sequence spans 236 residues: MQPITQIPLTFDTVVNLLGSASGIGWILNYILMTYYSFRDKTYSMSMLPLCCNIAWEFVYGILCPSSTFVVRPVILSWLVLNCLVVYAAIKYSPNEWAHAPLVQRHLPLLFTVGIAACTGFHIALIRKFDPATAFLWSARSCQVLLSIGGLFQLLCRSSTKGGSYVLWLSRFLGSICGVLKMTLMWKYGESRFPWLDDPLTAYCIALWIISDVLYGVVFYSLRSKELAGAGKAKAI.

7 helical membrane-spanning segments follow: residues 13–33 (TVVN…YILM), 45–65 (MSML…ILCP), 70–90 (VVRP…YAAI), 106–126 (HLPL…IALI), 135–155 (FLWS…FQLL), 166–186 (VLWL…TLMW), and 200–220 (LTAY…VVFY).

It belongs to the paxB family.

The protein resides in the membrane. The protein operates within secondary metabolite biosynthesis; terpenoid biosynthesis. Functionally, terpene cyclase; part of the gene cluster that mediates the biosynthesis of anditomin, a fungal meroterpenoid. The first step of the pathway is the synthesis of 3,5-dimethylorsellinic acid (DMOA) by the polyketide synthase andM. DMOA is then converted to the phthalide compound 5,7-dihydroxy-4,6-dimethylphthalide (DHDMP) by the cytochrome P450 monooxygenase andK, which is further prenylated by the prenyltransferase andD to yield farnesyl-DHDMP. Further epoxidation by the FAD-dependent monooxygenase andE leads to epoxyfarnesyl-DHDMP. The next step involves the terpene cyclase andB that converts epoxyfarnesyl-DHDMP into preandiloid A through opening of the epoxide ring followed by the cyclization of the farnesyl moiety. Preandiloid A is in turn oxidized at the C-3 hydroxyl group to yield preandiloid B by the dehydrogenase andC. The dioxygenase andA is solely responsible for the dehydrogenation of preandiloid B leading to the enone preandiloid C, as well as for the intriguing structural rearrangement to generate the bicyclo[2.2.2]octane core, transforming preandiloid C into andiconin. FAD-binding monooxygenase andJ then produces andilesin D which is reduced by dehydrogenase andI to yield andilesin A. Action of acetyltransferase andG followed by a spontaneous acetate elimination leads then to andilesin B, which is in turn substrate of the short chain dehydrogenase andH to yield andilesin C. Finally, the dioxygenase andF catalyzes the transformation of andilesin C to anditomin. In Emericella variicolor (Aspergillus stellatus), this protein is Terpene cyclase andB.